Consider the following 354-residue polypeptide: MRFAPDYVLCPPTATRRLRATHPSVSTIYFLFTIFVVSTVFHCHQRLALVPAPWAYSARVVVVPGHLPREGMWTINAMGRLGNQMGEYATLYALAKENGRPAYIPAQMHSTLAPIFRISLPVLHSSTASRVPWQNYHLNDWMEERYRHIPVPYVRLTGYPCSWTFYHHLRHEILREFTLHDHVREEAQAFLRGLRVNGSRPSTFVGVHVRRGDYVRVMPQVWKGVVADRGYLEQALDWFRAPTAPPVFVVTSNGMAWCRENIDASRGDVVFAGNGLEGSPAKDFALLTQCNHTVMTIGTFGFWAAYLTGGDTVYLANYTAPDSPFHLVFKPEAAFLPEWVGITANMGRALWSGL.

Residues 1-22 (MRFAPDYVLCPPTATRRLRATH) are Cytoplasmic-facing. A helical; Signal-anchor for type II membrane protein transmembrane segment spans residues 23 to 43 (PSVSTIYFLFTIFVVSTVFHC). The Lumenal portion of the chain corresponds to 44-354 (HQRLALVPAP…NMGRALWSGL (311 aa)). N-linked (GlcNAc...) asparagine glycosylation is found at N197, N291, and N317.

This sequence belongs to the glycosyltransferase 11 family. In terms of tissue distribution, salivary and lactating mammary glands.

The protein localises to the golgi apparatus. It is found in the golgi stack membrane. It catalyses the reaction a beta-D-galactosyl-(1-&gt;3)-N-acetyl-beta-D-glucosaminyl derivative + GDP-beta-L-fucose = an alpha-L-Fuc-(1-&gt;2)-beta-D-Gal-(1-&gt;3)-beta-D-GlcNAc derivative + GDP + H(+). The catalysed reaction is a beta-D-galactosyl-(1-&gt;4)-N-acetyl-beta-D-glucosaminyl derivative + GDP-beta-L-fucose = an alpha-L-Fuc-(1-&gt;2)-beta-D-Gal-(1-&gt;4)-beta-D-GlcNAc derivative + GDP + H(+). It carries out the reaction a neolactoside nLc4Cer + GDP-beta-L-fucose = a neolactoside IV(2)-alpha-Fuc-nLc4Cer + GDP + H(+). The enzyme catalyses a neolactoside nLc4Cer(d18:1(4E)) + GDP-beta-L-fucose = a neolactoside IV(2)-alpha-Fuc-nLc4Cer(d18:1(4E)) + GDP + H(+). It catalyses the reaction a ganglioside GM1 + GDP-beta-L-fucose = a ganglioside Fuc-GM1 + GDP + H(+). The catalysed reaction is a ganglioside GA1 + GDP-beta-L-fucose = a ganglioside Fuc-GA1 + GDP + H(+). It carries out the reaction Lc4Cer + GDP-beta-L-fucose = alpha-L-fucosyl-(1-&gt;2)-beta-D-galactosyl-(1-&gt;3)-N-acetyl-beta-D-glucosaminyl-(1-&gt;3)-beta-D-galactosyl-(1-&gt;4)-beta-D-glucosyl-(1&lt;-&gt;1')-ceramide + GDP + H(+). The enzyme catalyses a beta-D-Gal-(1-&gt;3)-beta-D-GlcNAc-(1-&gt;3)-beta-D-Gal-(1-&gt;4)-beta-D-Glc-(1&lt;-&gt;1')-Cer(d18:1(4E)) + GDP-beta-L-fucose = alpha-L-fucosyl-(1-&gt;2)- beta-D-galactosyl-(1-&gt;3)-N-acetyl-beta-D-glucosaminyl-(1-&gt;3)-beta-D-galactosyl-(1-&gt;4)-beta-D-glucosyl-(1&lt;-&gt;1')-N-acylsphing-4-enine + GDP + H(+). It catalyses the reaction a ganglioside GD1b + GDP-beta-L-fucose = a ganglioside Fuc-GD1b + GDP + H(+). The catalysed reaction is a ganglioside GM1 (d18:1(4E)) + GDP-beta-L-fucose = a ganglioside Fuc-GM1 (d18:1(4E)) + GDP + H(+). It carries out the reaction a globoside GalGb4Cer (d18:1(4E)) + GDP-beta-L-fucose = a globoside Globo-H (d18:1(4E)) + GDP + H(+). The enzyme catalyses a lactoside III(4)-a-Fuc-Lc4Cer + GDP-beta-L-fucose = a lactoside IV(2),III(4)-a-[Fuc]2-Lc4Cer + GDP + H(+). It catalyses the reaction beta-D-galactosyl-(1-&gt;3)-N-acetyl-D-galactosamine + GDP-beta-L-fucose = alpha-L-fucosyl-(1-&gt;2)-beta-D-galactosyl-(1-&gt;3)-N-acetyl-D-galactosamine + GDP + H(+). It participates in protein modification; protein glycosylation. Its function is as follows. Catalyzes the transfer of L-fucose, from a guanosine diphosphate-beta-L-fucose, to the terminal galactose on both O- and N-linked glycans chains of cell surface glycoproteins and glycolipids and the resulting epitope regulates several processes such as cell-cell interaction including host-microbe interaction, cell surface expression and cell proliferation. Preferentially fucosylates gangliosides GA1 and GM1 in the antrum, cecum and colon and in the female reproductive organs. Fucosylated host glycoproteins or glycolipids mediate interaction with intestinal microbiota influencing its composition. Creates a soluble precursor oligosaccharide FuC-alpha ((1,2)Galbeta-) called the H antigen which is an essential substrate for the final step in the soluble ABO blood group antigen synthesis pathway. In Oryctolagus cuniculus (Rabbit), this protein is Galactoside alpha-(1,2)-fucosyltransferase 2.